A 160-amino-acid chain; its full sequence is Large ribosomal subunit protein uL22c (160 aa).

Belongs to the universal ribosomal protein uL22 family. In terms of assembly, part of the 50S ribosomal subunit.

The protein localises to the plastid. It localises to the chloroplast. This protein binds specifically to 23S rRNA. Its function is as follows. The globular domain of the protein is located near the polypeptide exit tunnel on the outside of the subunit, while an extended beta-hairpin is found that lines the wall of the exit tunnel in the center of the 70S ribosome. The sequence is that of Large ribosomal subunit protein uL22c (rpl22) from Panax ginseng (Korean ginseng).